A 424-amino-acid chain; its full sequence is Adenylosuccinate synthetase (424 aa).

GTP contacts are provided by residues 12 to 18 and 40 to 42; these read GDEGKGK and GHT. Catalysis depends on Asp-13, which acts as the Proton acceptor. Residues Asp-13 and Gly-40 each coordinate Mg(2+). Residues 13–16, 38–41, Thr-130, Arg-144, Asn-220, Thr-235, and Arg-299 each bind IMP; these read DEGK and NAGH. His-41 (proton donor) is an active-site residue. Residue 295-301 participates in substrate binding; it reads VTTGRRR. Residues Arg-301, 327 to 329, and 412 to 414 each bind GTP; these read KLD and GTG.

Belongs to the adenylosuccinate synthetase family. Homodimer. Mg(2+) is required as a cofactor.

The protein resides in the cytoplasm. It carries out the reaction IMP + L-aspartate + GTP = N(6)-(1,2-dicarboxyethyl)-AMP + GDP + phosphate + 2 H(+). Its pathway is purine metabolism; AMP biosynthesis via de novo pathway; AMP from IMP: step 1/2. Its function is as follows. Plays an important role in the de novo pathway and in the salvage pathway of purine nucleotide biosynthesis. Catalyzes the first committed step in the biosynthesis of AMP from IMP. In Aspergillus flavus (strain ATCC 200026 / FGSC A1120 / IAM 13836 / NRRL 3357 / JCM 12722 / SRRC 167), this protein is Adenylosuccinate synthetase.